Consider the following 1021-residue polypeptide: SWI/SNF-related matrix-associated actin-dependent regulator of chromatin subfamily A containing DEAD/H box 1 (1021 aa).

Residue M1 is modified to N-acetylmethionine. Disordered stretches follow at residues 1 to 82 (MNLF…SLSC) and 124 to 151 (SEPS…EDLS). Residues 7-19 (DRFRFEKRSKIEE) are compositionally biased toward basic and acidic residues. Positions 22–39 (EAAPQPSQARPSSPISLS) are enriched in low complexity. T54 is modified (phosphothreonine). S57 carries the phosphoserine modification. K77 is covalently cross-linked (Glycyl lysine isopeptide (Lys-Gly) (interchain with G-Cter in SUMO2)). Phosphoserine occurs at positions 79, 124, 127, 132, 144, 145, and 151. The 43-residue stretch at 156 to 198 (LKDAKLQTLKELFPQRSDSDLLKLIESTSTMDGAIAAALLMFG) folds into the CUE 1 domain. A disordered region spans residues 201–246 (GGGPRKRKLSSSSEEDDVNDDQSVKQPRGDRGEESNESAEASSNWE). Phosphoserine is present on residues S210, S213, S235, and S238. A CUE 2 domain is found at 247-290 (KQESIVLKLQKEFPNFDKQELREVLKEHEWMYTEALESLKVFAE). S298 is subject to Phosphoserine. The segment at 329–366 (VKPQNGFNKKRKKNVFNPKKAVEDSEYDSGSDAGSSLD) is disordered. Glycyl lysine isopeptide (Lys-Gly) (interchain with G-Cter in SUMO2) cross-links involve residues K330 and K466. Residues 504–672 (ALVHKHGLNG…MSLLNFVMPH (169 aa)) form the Helicase ATP-binding domain. Position 516–524 (516–524 (ADEMGLGKT)) interacts with ATP. A DEGH box motif is present at residues 623–626 (DEGH). A Nuclear localization signal motif is present at residues 716–733 (RRVKEEVLKLLPPKKDRI). K719 is covalently cross-linked (Glycyl lysine isopeptide (Lys-Gly) (interchain with G-Cter in SUMO2)). The Helicase C-terminal domain occupies 853-1005 (ALGCILSELK…MTTVDEADEG (153 aa)). ATP is bound at residue 892–899 (YLRLDGKT). Residue K991 forms a Glycyl lysine isopeptide (Lys-Gly) (interchain with G-Cter in SUMO2) linkage. Residues 1000 to 1003 (DEAD) carry the DEAD box motif.

This sequence belongs to the SNF2/RAD54 helicase family. Binds to DNA preferentially in the vicinity of transcriptional start sites. Interacts with MSH2 and TRIM28. Part of a complex composed of TRIM28, HDAC1, HDAC2 and EHMT2. Interacts with PCNA.

Its subcellular location is the nucleus. It is found in the chromosome. It carries out the reaction ATP + H2O = ADP + phosphate + H(+). Its function is as follows. DNA helicase that possesses intrinsic ATP-dependent nucleosome-remodeling activity and is both required for DNA repair and heterochromatin organization. Promotes DNA end resection of double-strand breaks (DSBs) following DNA damage: probably acts by weakening histone DNA interactions in nucleosomes flanking DSBs. Required for the restoration of heterochromatin organization after replication. Acts at replication sites to facilitate the maintenance of heterochromatin by directing H3 and H4 histones deacetylation, H3 'Lys-9' trimethylation (H3K9me3) and restoration of silencing. This chain is SWI/SNF-related matrix-associated actin-dependent regulator of chromatin subfamily A containing DEAD/H box 1 (Smarcad1), found in Mus musculus (Mouse).